We begin with the raw amino-acid sequence, 390 residues long: tRNA(Met) cytidine acetate ligase (390 aa).

Residues 7-20 (VVEY…HKLH), G101, N162, and R187 each bind ATP.

Belongs to the TmcAL family.

It is found in the cytoplasm. It carries out the reaction cytidine(34) in elongator tRNA(Met) + acetate + ATP = N(4)-acetylcytidine(34) in elongator tRNA(Met) + AMP + diphosphate. Functionally, catalyzes the formation of N(4)-acetylcytidine (ac(4)C) at the wobble position of elongator tRNA(Met), using acetate and ATP as substrates. First activates an acetate ion to form acetyladenylate (Ac-AMP) and then transfers the acetyl group to tRNA to form ac(4)C34. The sequence is that of tRNA(Met) cytidine acetate ligase from Listeria monocytogenes serotype 4b (strain F2365).